Here is a 377-residue protein sequence, read N- to C-terminus: Guanine nucleotide-binding protein subunit alpha-13 (377 aa).

Residues C14 and C18 are each lipidated (S-palmitoyl cysteine). In terms of domain architecture, G-alpha spans 47–377 (RLVKILLLGA…HDNLKQLMLQ (331 aa)). A G1 motif region spans residues 50 to 63 (KILLLGAGESGKST). Residues 58 to 63 (ESGKST), S173, and 197 to 200 (LLAR) contribute to the GTP site. S62 provides a ligand contact to Mg(2+). A G2 motif region spans residues 195–203 (DILLARRPT). Residue T203 coordinates Mg(2+). The residue at position 203 (T203) is a Phosphothreonine; by PKA. A G3 motif region spans residues 218 to 227 (FKMVDVGGQR). The G4 motif stretch occupies residues 287–294 (ILFLNKTD). GTP-binding positions include 291–294 (NKTD) and A349. The interval 347 to 352 (TTAINT) is G5 motif.

Belongs to the G-alpha family. G(12) subfamily. G proteins are composed of 3 units; alpha, beta and gamma. The alpha chain contains the guanine nucleotide binding site. Interacts with UBXD5. Interacts with HAX1. Interacts (in GTP-bound form) with PPP5C (via TPR repeats); activates PPP5C phosphatase activity and translocates PPP5C to the cell membrane. Interacts with RGS22. Interacts with ARHGEF1. Interacts (in GTP-bound form) with ARHGEF11 (via RGS domain). Interacts (in GTP-bound form) with ARHGEF12 (via RGS domain). Interacts (in GTP-bound form) with CTNND1. Interacts with GAS2L2. Interacts with GPR35. Interacts with GPR174. Palmitoylation is critical for proper membrane localization and signaling. In terms of processing, phosphorylation on Thr-203 by PKA destabilizes the heterotrimer of alpha, beta and gamma, and inhibits Rho activation.

The protein localises to the membrane. Its subcellular location is the melanosome. It is found in the cytoplasm. It localises to the nucleus. Guanine nucleotide-binding proteins (G proteins) are involved as modulators or transducers in various transmembrane signaling systems. Activates effector molecule RhoA by binding and activating RhoGEFs (ARHGEF1/p115RhoGEF, ARHGEF11/PDZ-RhoGEF and ARHGEF12/LARG). GNA13-dependent Rho signaling subsequently regulates transcription factor AP-1 (activating protein-1). Promotes tumor cell invasion and metastasis by activating RhoA/ROCK signaling pathway. Inhibits CDH1-mediated cell adhesion in process independent from Rho activation. In lymphoid follicles, transmits P2RY8- and S1PR2-dependent signals that lead to inhibition of germinal center (GC) B cell growth and migration outside the GC niche. The protein is Guanine nucleotide-binding protein subunit alpha-13 (Gna13) of Rattus norvegicus (Rat).